The sequence spans 762 residues: 5-methyltetrahydropteroyltriglutamate--homocysteine methyltransferase (762 aa).

Residues 17–20 and K111 each bind 5-methyltetrahydropteroyltri-L-glutamate; that span reads REWK. Residues 435–437 and E488 contribute to the L-homocysteine site; that span reads IGS. L-methionine-binding positions include 435-437 and E488; that span reads IGS. 5-methyltetrahydropteroyltri-L-glutamate-binding positions include 519–520 and W565; that span reads RC. D603 provides a ligand contact to L-homocysteine. D603 lines the L-methionine pocket. E609 is a binding site for 5-methyltetrahydropteroyltri-L-glutamate. Zn(2+) contacts are provided by H645, C647, and E669. H698 functions as the Proton donor in the catalytic mechanism. C730 lines the Zn(2+) pocket.

The protein belongs to the vitamin-B12 independent methionine synthase family. It depends on Zn(2+) as a cofactor.

It catalyses the reaction 5-methyltetrahydropteroyltri-L-glutamate + L-homocysteine = tetrahydropteroyltri-L-glutamate + L-methionine. The protein operates within amino-acid biosynthesis; L-methionine biosynthesis via de novo pathway; L-methionine from L-homocysteine (MetE route): step 1/1. Catalyzes the transfer of a methyl group from 5-methyltetrahydrofolate to homocysteine resulting in methionine formation. The chain is 5-methyltetrahydropteroyltriglutamate--homocysteine methyltransferase from Bacillus mycoides (strain KBAB4) (Bacillus weihenstephanensis).